Here is a 469-residue protein sequence, read N- to C-terminus: Alpha-galactosidase (469 aa).

Positions 1 to 17 (MFPFFFALFFSSTDVLA) are cleaved as a signal peptide. A disulfide bridge connects residues Cys41 and Cys73. Asp71 and Asp72 together coordinate substrate. Asn81 is a glycosylation site (N-linked (GlcNAc...) asparagine). Residues Cys120 and Cys150 are joined by a disulfide bond. Position 146 (Lys146) interacts with substrate. Asp148 (nucleophile) is an active-site residue. Asn174 carries an N-linked (GlcNAc...) asparagine glycan. Arg204 contacts substrate. The active-site Proton donor is Asp208. 2 cysteine pairs are disulfide-bonded: Cys220-Cys236 and Cys222-Cys229. Residue Gln250 participates in substrate binding. Asn269, Asn369, Asn402, Asn412, Asn421, Asn426, and Asn434 each carry an N-linked (GlcNAc...) asparagine glycan.

Belongs to the glycosyl hydrolase 27 family. Homotetramer.

The protein resides in the secreted. It carries out the reaction Hydrolysis of terminal, non-reducing alpha-D-galactose residues in alpha-D-galactosides, including galactose oligosaccharides, galactomannans and galactolipids.. The polypeptide is Alpha-galactosidase (MEL) (Lachancea cidri (Yeast)).